The sequence spans 254 residues: Small ribosomal subunit protein uS5 (254 aa).

The segment covering 1–10 (MSAPEAQQQK) has biased composition (polar residues). Residues 1–34 (MSAPEAQQQKRGGFGGRNRGRPNRRGPRNTEEKG) are disordered. At S2 the chain carries N-acetylserine. The residue at position 11 (R11) is an Asymmetric dimethylarginine; by HMT1; alternate. R11 is modified (omega-N-methylarginine; by HMT1; alternate). Residue R17 is modified to Omega-N-methylarginine; by HMT1. A compositionally biased stretch (basic residues) spans 18–27 (NRGRPNRRGP). K33 is covalently cross-linked (Glycyl lysine isopeptide (Lys-Gly) (interchain with G-Cter in ubiquitin)). The 64-residue stretch at 76–139 (LQDEVMNIKP…IIAKLSVIPI (64 aa)) folds into the S5 DRBM domain.

This sequence belongs to the universal ribosomal protein uS5 family. In terms of assembly, component of the small ribosomal subunit (SSU). Mature yeast ribosomes consist of a small (40S) and a large (60S) subunit. The 40S small subunit contains 1 molecule of ribosomal RNA (18S rRNA) and 33 different proteins (encoded by 57 genes). The large 60S subunit contains 3 rRNA molecules (25S, 5.8S and 5S rRNA) and 46 different proteins (encoded by 81 genes). Interacts with snoRNA U3. Interacts with MPP10. Component of the ribosomal small subunit (SSU) processome composed of at least 40 protein subunits and snoRNA U3. In terms of processing, N-terminally acetylated by acetyltransferase NatA.

The protein resides in the cytoplasm. It localises to the nucleus. The protein localises to the nucleolus. Component of the ribosome, a large ribonucleoprotein complex responsible for the synthesis of proteins in the cell. The small ribosomal subunit (SSU) binds messenger RNAs (mRNAs) and translates the encoded message by selecting cognate aminoacyl-transfer RNA (tRNA) molecules. The large subunit (LSU) contains the ribosomal catalytic site termed the peptidyl transferase center (PTC), which catalyzes the formation of peptide bonds, thereby polymerizing the amino acids delivered by tRNAs into a polypeptide chain. The nascent polypeptides leave the ribosome through a tunnel in the LSU and interact with protein factors that function in enzymatic processing, targeting, and the membrane insertion of nascent chains at the exit of the ribosomal tunnel. uS5 is important for the assembly and function of the 40S ribosomal subunit. Mutations in this protein affects the control of translational fidelity. Involved in nucleolar processing of pre-18S ribosomal RNA and ribosome assembly. The chain is Small ribosomal subunit protein uS5 from Saccharomyces cerevisiae (strain ATCC 204508 / S288c) (Baker's yeast).